The following is an 846-amino-acid chain: Integrin beta-PS (846 aa).

The signal sequence occupies residues 1 to 28 (MILERNRRCQLALLMIAILAAIAGQTDA). Residues 29–777 (QKAAKLTAVS…NKECPAKVFM (749 aa)) lie on the Extracellular side of the membrane. An intrachain disulfide couples Cys-46 to Cys-55. The N-linked (GlcNAc...) asparagine glycan is linked to Asn-72. The 234-residue stretch at 186–419 (DLYYLMDLSK…ELVKEEYRKI (234 aa)) folds into the VWFA domain. The cysteines at positions 249 and 252 are disulfide-linked. Asn-266 and Asn-277 each carry an N-linked (GlcNAc...) asparagine glycan. Cysteines 300 and 341 form a disulfide. Asn-403 and Asn-428 each carry an N-linked (GlcNAc...) asparagine glycan. Intrachain disulfides connect Cys-441–Cys-453, Cys-473–Cys-741, Cys-507–Cys-530, Cys-522–Cys-533, Cys-535–Cys-544, Cys-546–Cys-579, Cys-561–Cys-577, Cys-571–Cys-582, Cys-584–Cys-599, Cys-601–Cys-624, Cys-606–Cys-622, Cys-614–Cys-627, Cys-629–Cys-638, Cys-640–Cys-664, Cys-647–Cys-662, Cys-656–Cys-667, Cys-669–Cys-682, Cys-685–Cys-688, Cys-692–Cys-701, Cys-698–Cys-771, and Cys-719–Cys-749. 4 consecutive I-EGF domains span residues 507-545 (CENP…NKCE), 546-600 (CSAT…KHCE), 601-639 (CDNF…SNCG), and 640-683 (CQES…RHCE). A glycan (N-linked (GlcNAc...) asparagine) is linked at Asn-557. Residue Asn-603 is glycosylated (N-linked (GlcNAc...) asparagine). N-linked (GlcNAc...) asparagine glycosylation is present at Asn-644. N-linked (GlcNAc...) asparagine glycosylation occurs at Asn-718. Residues 778–798 (LGIVMGVIAAIVLVGLAILLL) form a helical membrane-spanning segment. Over 799–846 (WKLLTTIHDRREFARFEKERMNAKWDTGENPIYKQATSTFKNPMYAGK) the chain is Cytoplasmic. Phosphotyrosine is present on residues Tyr-831 and Tyr-843.

This sequence belongs to the integrin beta chain family. Heterodimer of an alpha and a beta subunit. Beta-PS associates with either alpha-PS1, alpha-PS2, alpha-PS3, alpha-PS4 or alpha-PS5. In ovaries, strongly expressed in follicle cells. In oocytes, expressed in the forming dorsal appendages (at protein level). Expressed in the embryonic dorsal cuticle, the larval eye and the wing imaginal disk. In testes, detected at the interface between somatic hub cells and cyst stem cells.

The protein resides in the cell membrane. Its subcellular location is the apical cell membrane. It is found in the lateral cell membrane. It localises to the basal cell membrane. Functionally, integrin alpha-PS1/beta-PS is a receptor for laminin. Integrin alpha-PS2/beta-PS is a receptor for Tig, wb and Ten-m. Contributes to endodermal integrity and adhesion between the midgut epithelium and the surrounding visceral muscle. Essential for migration of the primordial midgut cells and for maintaining, but not establishing, cell polarity in the midgut epithelium. The two beta subunits mediate midgut migration by distinct mechanisms: beta-PS requires rhea/talin and Itgbn does not. Required for rhea/talin correct cellular localization in the midgut. Required for many embryonic (dorsal closure and somatic muscle attachments) and postembryonic developmental processes (attachment between cell layers of imaginal disks, organization of ommatidial arrays and flight muscle development). Involved in the function and/or development of the olfactory system. In the testes, essential for shv-dependent maintenance of somatic hub cells and their localization to the apical tip. Plays a role in timely border cell migration during oogenesis. This is Integrin beta-PS (mys) from Drosophila melanogaster (Fruit fly).